Here is a 186-residue protein sequence, read N- to C-terminus: MASSAASSVRPPRPKKEPQALIIPKNAAEEQKLKLERLMKNPDKAVPIPEKMSEWAPRPPPEFVRDVMGSSAGAGSGEFHVYRHLRRREYQRQDYMDAMAEKQKLEAEFQKRLERNKIAAEEQTAKRRKKRQKLKEKKLLAKKMKLEQKKQSEASSETQEQPSSGSEEASGTEDEEEDAPSFITGR.

The tract at residues 1–50 is interaction with EIF2AK2; that stretch reads MASSAASSVRPPRPKKEPQALIIPKNAAEEQKLKLERLMKNPDKAVPIPE. Disordered regions lie at residues 39 to 61 and 119 to 186; these read MKNP…RPPP and AAEE…ITGR. The required for RNA-binding stretch occupies residues 51 to 143; it reads KMSEWAPRPP…LKEKKLLAKK (93 aa). Residues 86–153 are a coiled coil; it reads RRREYQRQDY…MKLEQKKQSE (68 aa). Residues 126 to 138 form a required for nuclear localization region; that stretch reads KRRKKRQKLKEKK. A compositionally biased stretch (basic residues) spans 126-143; that stretch reads KRRKKRQKLKEKKLLAKK. Over residues 153-162 the composition is skewed to polar residues; the sequence is EASSETQEQP. The span at 170–179 shows a compositional bias: acidic residues; it reads SGTEDEEEDA.

This sequence belongs to the PRKRIP1 family. As to quaternary structure, component of the pre-catalytic and post-catalytic spliceosome complexes. Interacts with EIF2AK2.

It is found in the nucleus. It localises to the nucleolus. In terms of biological role, required for pre-mRNA splicing as component of the spliceosome. Binds double-stranded RNA. Inhibits EIF2AK2 kinase activity. The protein is PRKR-interacting protein 1 (PRKRIP1) of Bos taurus (Bovine).